Reading from the N-terminus, the 88-residue chain is Small ribosomal subunit protein uS19 (88 aa).

Belongs to the universal ribosomal protein uS19 family.

Protein S19 forms a complex with S13 that binds strongly to the 16S ribosomal RNA. In Carsonella ruddii (strain PV), this protein is Small ribosomal subunit protein uS19.